A 279-amino-acid polypeptide reads, in one-letter code: NADH dehydrogenase [ubiquinone] iron-sulfur protein 3, mitochondrial (279 aa).

The N-terminal 27 residues, 1–27, are a transit peptide targeting the mitochondrion; the sequence is MISRTLLKRSLPTVQFLRPFTRSSIRR. Residues 249-279 are disordered; it reads EPVGEGKDFTPESFKLPTPEPEPEKESDEKK. The segment covering 270 to 279 has biased composition (basic and acidic residues); that stretch reads EPEKESDEKK.

Belongs to the complex I 30 kDa subunit family. As to quaternary structure, core subunit of respiratory chain NADH dehydrogenase (Complex I).

The protein localises to the mitochondrion inner membrane. The enzyme catalyses a ubiquinone + NADH + 5 H(+)(in) = a ubiquinol + NAD(+) + 4 H(+)(out). Its function is as follows. Core subunit of the mitochondrial membrane respiratory chain NADH dehydrogenase (Complex I) which catalyzes electron transfer from NADH through the respiratory chain, using ubiquinone as an electron acceptor. Plays a role in cell wall integrity and is involved in osmotic and oxidative resistance, yeast to hypha transition and the ability to damage and invade oral epithelial cells. This chain is NADH dehydrogenase [ubiquinone] iron-sulfur protein 3, mitochondrial (ALI1), found in Candida albicans (strain SC5314 / ATCC MYA-2876) (Yeast).